The following is a 912-amino-acid chain: Protein translocase subunit SecA (912 aa).

ATP-binding positions include Gln-87, 105–109 (GEGKT), and Asp-508. The disordered stretch occupies residues 865-912 (DEEAAQVQSGNAPLPVSQVTRDEPKVGRNDPCPCGSGKKYKHCHGQLS). 4 residues coordinate Zn(2+): Cys-896, Cys-898, Cys-907, and His-908. The segment covering 902–912 (KKYKHCHGQLS) has biased composition (basic residues).

The protein belongs to the SecA family. In terms of assembly, monomer and homodimer. Part of the essential Sec protein translocation apparatus which comprises SecA, SecYEG and auxiliary proteins SecDF-YajC and YidC. Requires Zn(2+) as cofactor.

The protein resides in the cell inner membrane. It localises to the cytoplasm. The catalysed reaction is ATP + H2O + cellular proteinSide 1 = ADP + phosphate + cellular proteinSide 2.. Its function is as follows. Part of the Sec protein translocase complex. Interacts with the SecYEG preprotein conducting channel. Has a central role in coupling the hydrolysis of ATP to the transfer of proteins into and across the cell membrane, serving both as a receptor for the preprotein-SecB complex and as an ATP-driven molecular motor driving the stepwise translocation of polypeptide chains across the membrane. The protein is Protein translocase subunit SecA of Xanthomonas oryzae pv. oryzae (strain PXO99A).